The sequence spans 471 residues: 6-phosphofructo-2-kinase/fructose-2,6-bisphosphatase 1 (471 aa).

Serine 2 bears the N-acetylserine mark. The segment at 2–250 (SREMGELTQT…AYYLMNIHVT (249 aa)) is 6-phosphofructo-2-kinase. Phosphoserine; by PKA is present on serine 33. ATP is bound at residue 49 to 57 (GLPARGKTY). The beta-D-fructose 6-phosphate site is built by arginine 82 and arginine 105. The active site involves aspartate 131. 2 residues coordinate beta-D-fructose 6-phosphate: threonine 133 and arginine 139. Serine 141 carries the phosphoserine modification. Residue cysteine 161 is part of the active site. 170-175 (NIKQVK) contributes to the ATP binding site. The beta-D-fructose 6-phosphate site is built by lysine 175, arginine 196, and tyrosine 200. Residues 251 to 471 (PRSIYLCRHG…EALDTVPAHY (221 aa)) are fructose-2,6-bisphosphatase. Beta-D-fructose 2,6-bisphosphate is bound at residue arginine 258. The Tele-phosphohistidine intermediate role is filled by histidine 259. 3 residues coordinate beta-D-fructose 2,6-bisphosphate: asparagine 265, glycine 271, and arginine 308. Glutamate 328 functions as the Proton donor/acceptor in the catalytic mechanism. Beta-D-fructose 2,6-bisphosphate contacts are provided by tyrosine 339, arginine 353, lysine 357, tyrosine 368, glutamine 394, and arginine 398. 350-353 (FALR) lines the ATP pocket. Residues 394–398 (QAVMR) and tyrosine 430 each bind ATP.

The protein in the C-terminal section; belongs to the phosphoglycerate mutase family. As to quaternary structure, homodimer. Liver.

It carries out the reaction beta-D-fructose 2,6-bisphosphate + H2O = beta-D-fructose 6-phosphate + phosphate. The catalysed reaction is beta-D-fructose 6-phosphate + ATP = beta-D-fructose 2,6-bisphosphate + ADP + H(+). Phosphorylation at Ser-33 inhibits the kinase and activates the bisphosphatase. Functionally, synthesis and degradation of fructose 2,6-bisphosphate. The polypeptide is 6-phosphofructo-2-kinase/fructose-2,6-bisphosphatase 1 (Mus musculus (Mouse)).